The following is a 123-amino-acid chain: uncharacterized protein (123 aa).

A signal peptide spans 1 to 20 (MSPLIVGTLIIILLSGLATA). Residue Gly-96 is the site of GPI-anchor amidated glycine attachment. Residues 97-123 (SSPTTKRVIYIVMILLVLITLAVNLKH) constitute a propeptide, removed in mature form.

The protein resides in the cell membrane. This is an uncharacterized protein from Schizosaccharomyces pombe (strain 972 / ATCC 24843) (Fission yeast).